We begin with the raw amino-acid sequence, 506 residues long: Histidine ammonia-lyase (506 aa).

The 5-imidazolinone (Ala-Gly) cross-link spans 144 to 146; it reads ASG. 2,3-didehydroalanine (Ser) is present on S145.

Belongs to the PAL/histidase family. In terms of processing, contains an active site 4-methylidene-imidazol-5-one (MIO), which is formed autocatalytically by cyclization and dehydration of residues Ala-Ser-Gly.

The protein localises to the cytoplasm. It carries out the reaction L-histidine = trans-urocanate + NH4(+). It participates in amino-acid degradation; L-histidine degradation into L-glutamate; N-formimidoyl-L-glutamate from L-histidine: step 1/3. The polypeptide is Histidine ammonia-lyase (Legionella pneumophila (strain Paris)).